Reading from the N-terminus, the 490-residue chain is Costunolide synthase (490 aa).

A helical; Signal-anchor for type II membrane protein transmembrane segment spans residues 3 to 23; sequence PLTIVSLAVASFLLFAFWALS. 2 N-linked (GlcNAc...) asparagine glycosylation sites follow: asparagine 167 and asparagine 255. Cysteine 432 contributes to the heme binding site.

It belongs to the cytochrome P450 family. Requires heme as cofactor.

It localises to the membrane. It carries out the reaction germacra-1(10),4,11(13)-trien-12-oate + reduced [NADPH--hemoprotein reductase] + O2 = (+)-costunolide + oxidized [NADPH--hemoprotein reductase] + 2 H2O. The protein operates within secondary metabolite biosynthesis; terpenoid biosynthesis. Functionally, involved in the biosynthesis of germacrene-derived sesquiterpene lactones. Component of the parthenolide biosynthetic pathway; parthenolide and conjugates are promising anti-cancer drugs highly active against colon cancer cells. Hydroxylates germacrene A acid to 6-alpha-hydroxy-germacrne A acid, a precursor of sesquiterpene lactones that spontaneously undergoes a lactonization which yields costunolide. This Lactuca sativa (Garden lettuce) protein is Costunolide synthase.